Consider the following 727-residue polypeptide: Capsid protein VP1 (727 aa).

Positions 1–10 (MAPPAKRARR) are enriched in basic residues. Disordered stretches follow at residues 1 to 38 (MAPP…SDAA), 95 to 120 (VLTD…PPPH), and 141 to 184 (LAPM…VGIS). The Nuclear localization signal motif lies at 4–13 (PAKRARRGLV). Positions 19 to 64 (YLGPGNSLDQGEPTNPSDAAAKEHDEAYAAYLRSGKNPYLYFSPAD) are phospholipase A2-like. Residues 25-35 (SLDQGEPTNPS) are compositionally biased toward polar residues. The span at 166–183 (SGNGSGGGGGGGSGGVGI) shows a compositional bias: gly residues. Residue Asn-323 coordinates Mg(2+). A disulfide bridge connects residues Cys-633 and Cys-637.

This sequence belongs to the parvoviridae capsid protein family. As to quaternary structure, interacts with host TFRC.

Its subcellular location is the virion. The protein localises to the host nucleus. Its function is as follows. Capsid protein self-assembles to form an icosahedral capsid with a T=1 symmetry, about 22 nm in diameter, and consisting of 60 copies of two size variants of the capsid proteins, VP1 and VP2, which differ by the presence of an N-terminal extension in the minor protein VP1. The capsid encapsulates the genomic ssDNA. Capsid proteins are responsible for the attachment to host cell receptors. This attachment induces virion internalization predominantly through clathrin-dependent endocytosis. Binding to the host receptors also induces capsid rearrangements leading to surface exposure of VP1 N-terminus, specifically its phospholipase A2-like region and putative nuclear localization signal(s). VP1 N-terminus might serve as a lipolytic enzyme to breach the endosomal membrane during entry into host cell and might contribute to virus transport to the nucleus. The polypeptide is Capsid protein VP1 (Feline panleukopenia virus (strain 193) (FPV)).